Reading from the N-terminus, the 529-residue chain is Beta-hexosaminidase subunit alpha (529 aa).

An N-terminal signal peptide occupies residues 1–22 (MTSSRLWFSLLLAAAFAGRATA). Positions 23–88 (LWPWPQNFQT…PRPYLTGKRH (66 aa)) are excised as a propeptide. Cysteine 58 and cysteine 104 are joined by a disulfide. Asparagine 115, asparagine 157, and asparagine 295 each carry an N-linked (GlcNAc...) asparagine glycan. Cysteine 277 and cysteine 328 are disulfide-bonded. Glutamate 323 acts as the Proton donor in catalysis. Positions 423–424 (NR) are critical for hydrolysis GM2 gangliosides. Cysteines 505 and 522 form a disulfide.

The protein belongs to the glycosyl hydrolase 20 family. There are 3 beta-hexosaminidase isozymes: isozyme A (hexosaminidase A) is a heterodimer composed of one subunit alpha and one subunit beta (chain A and B); isozyme B (hexosaminidase B) is a homodimer of two beta subunits (two chains A and B); isozyme S (hexosaminidase S) is a homodimer of two alpha subunits. The composition of the dimer (isozyme A versus isozyme S) has a significant effect on the substrate specificity of the alpha subunit active site. In terms of processing, N-linked glycan at Asn-115 consists of Man(3)-GlcNAc(2). N-linked glycan at Asn-157 consists of either GlcNAc or GlcNAc(2)-Man(7-9). N-linked glycan at Asn-295 consists of either GlcNAc, GlcNAc-Fuc, or GlcNAc(2)-Man(4).

Its subcellular location is the lysosome. It catalyses the reaction Hydrolysis of terminal non-reducing N-acetyl-D-hexosamine residues in N-acetyl-beta-D-hexosaminides.. The enzyme catalyses N-acetyl-beta-D-galactosaminyl-(1-&gt;4)-beta-D-3-sulfogalactosyl-(1-&gt;4)-beta-D-glucosyl-(1&lt;-&gt;1')-ceramide + H2O = a beta-D-3-sulfogalactosyl-(1-&gt;4)-beta-D-glucosyl-(1&lt;-&gt;1')-ceramide + N-acetyl-beta-D-galactosamine. It carries out the reaction a ganglioside GM2 (d18:1(4E)) + H2O = a ganglioside GM3 (d18:1(4E)) + N-acetyl-beta-D-galactosamine. The catalysed reaction is a ganglioside GM2 + H2O = a ganglioside GM3 + N-acetyl-beta-D-galactosamine. It catalyses the reaction beta-D-GalNAc-(1-&gt;4)-alpha-L-IdoA-(1-&gt;3)-beta-D-GalNAc-4-sulfate-(1-&gt;4)-alpha-L-IdoA-(1-&gt;3)-D-GalNAc-4-sulfate + H2O = alpha-L-IdoA-(1-&gt;3)-beta-D-GalNAc-4-sulfate-(1-&gt;4)-alpha-L-IdoA-(1-&gt;3)-D-GalNAc-4-sulfate + N-acetyl-D-galactosamine. The enzyme catalyses N-acetyl-beta-D-6-sulfogalactosaminyl-(1-&gt;4)-alpha-L-iduronyl-(1-&gt;3)-N-acetyl-D-6-sulfogalactosamine + H2O = alpha-L-iduronyl-(1-&gt;3)-N-acetyl-D-6-sulfogalactosamine + N-acetyl-D-6-sulfogalactosamine. Addition of GM2A stimulates the hydrolysis of sulfated glycosphingolipid SM2 and the ganglioside GM2. Its function is as follows. Hydrolyzes the non-reducing end N-acetyl-D-hexosamine and/or sulfated N-acetyl-D-hexosamine of glycoconjugates, such as the oligosaccharide moieties from proteins and neutral glycolipids, or from certain mucopolysaccharides. The isozyme S is as active as the isozyme A on the anionic bis-sulfated glycans, the chondroitin-6-sulfate trisaccharide (C6S-3), and the dermatan sulfate pentasaccharide, and the sulfated glycosphingolipid SM2. The isozyme B does not hydrolyze each of these substrates, however hydrolyzes efficiently neutral oligosaccharide. Only the isozyme A is responsible for the degradation of GM2 gangliosides in the presence of GM2A. The chain is Beta-hexosaminidase subunit alpha from Homo sapiens (Human).